A 152-amino-acid chain; its full sequence is Transcriptional repressor NrdR (152 aa).

The segment at 3–34 is a zinc-finger region; it reads CPYCNASETKVIDSRLAAEGAQVRRRRSCNSC. Residues 49–139 enclose the ATP-cone domain; sequence PRIIKSSGKI…VYRDFQDIDA (91 aa).

This sequence belongs to the NrdR family. Zn(2+) serves as cofactor.

Functionally, negatively regulates transcription of bacterial ribonucleotide reductase nrd genes and operons by binding to NrdR-boxes. This chain is Transcriptional repressor NrdR, found in Psychrobacter cryohalolentis (strain ATCC BAA-1226 / DSM 17306 / VKM B-2378 / K5).